We begin with the raw amino-acid sequence, 394 residues long: Chorismate synthase (394 aa).

NADP(+) is bound by residues Arg-42 and Arg-48. FMN is bound by residues 137–139 (RAS), 258–259 (QA), Gly-302, 317–321 (KPIAT), and Arg-343.

This sequence belongs to the chorismate synthase family. Homotetramer. FMNH2 serves as cofactor.

It carries out the reaction 5-O-(1-carboxyvinyl)-3-phosphoshikimate = chorismate + phosphate. The protein operates within metabolic intermediate biosynthesis; chorismate biosynthesis; chorismate from D-erythrose 4-phosphate and phosphoenolpyruvate: step 7/7. Its function is as follows. Catalyzes the anti-1,4-elimination of the C-3 phosphate and the C-6 proR hydrogen from 5-enolpyruvylshikimate-3-phosphate (EPSP) to yield chorismate, which is the branch point compound that serves as the starting substrate for the three terminal pathways of aromatic amino acid biosynthesis. This reaction introduces a second double bond into the aromatic ring system. In Streptomyces coelicolor (strain ATCC BAA-471 / A3(2) / M145), this protein is Chorismate synthase.